The following is a 266-amino-acid chain: Nuclease (266 aa).

The first 21 residues, Met1 to Ala21, serve as a signal peptide directing secretion. Cys30 and Cys34 are joined by a disulfide. The Proton acceptor role is filled by His110. Asn140 contacts Mg(2+). A disulfide bond links Cys222 and Cys264.

This sequence belongs to the DNA/RNA non-specific endonuclease family. In terms of assembly, homodimer. It depends on Mg(2+) as a cofactor.

The protein resides in the secreted. The enzyme catalyses Endonucleolytic cleavage to 5'-phosphomononucleotide and 5'-phosphooligonucleotide end-products.. Its function is as follows. Catalyzes the hydrolysis of both DNA and RNA, double- or single-stranded, at the 3'position of the phosphodiester bond to produce 5'-phosphorylated mono-, di-, tri- and tetranucleotides. DNA is a slightly better substrate than RNA. This Serratia marcescens protein is Nuclease (nucA).